A 447-amino-acid chain; its full sequence is MAGQKILSLLVIALVVTFAAAARLLDEENAFSATTTTLGSGSGSTGIGFGAGTGSSGSGSTGFGFGAGSGSSGSGSTGSGLGAGTGSIPSSGSGPGLLPTASSVPGSLAGGGSGSLPTTGSATGAGAGTGSALGGGPGAGSALGGGAGAGPALGGGAGAGPALGGGAGAGSALGGGGAGAGPALGGGGAGAGPALGGGVAGSGSALGGGASAGPDNTLVFFMHDILGGSNPTARAVTGVVANPALSGQLPFAKPNGANLPVSNGVPSNNNNNGIVNNNNVPFLVGLGGTTANILQNNNNGNNILNGFPVASGGQLPSGSALQMLMFGTMTVIDDELTEGHELGSGLLGKAQGYYVASAIDGTSQTMAFTAMFESGGYEDSISFFGVLRTAVSESHIGVMGGTGKYVNARGFAILKTFTGSSGTQQNQPHQFTDGLETVVECTVYLSY.

Positions 1-21 (MAGQKILSLLVIALVVTFAAA) are cleaved as a signal peptide. Residues 74–85 (SGSTGSGLGAGT) are compositionally biased toward gly residues. Positions 74 to 123 (SGSTGSGLGAGTGSIPSSGSGPGLLPTASSVPGSLAGGGSGSLPTTGSAT) are disordered. The span at 86–107 (GSIPSSGSGPGLLPTASSVPGS) shows a compositional bias: low complexity.

Belongs to the plant dirigent protein family. As to quaternary structure, homodimer. In roots, mostly detected in root endodermis and quiescent center, and, to a lower extent, in root stele and cortex. Expressed in root vascular cylinder, flowers, siliques, cotyledon and leaf veins, and leaf margins. Present in the basal region of rosette leaf trichomes and in developing xylem.

The protein resides in the secreted. The protein localises to the extracellular space. It localises to the apoplast. In terms of biological role, dirigent proteins impart stereoselectivity on the phenoxy radical-coupling reaction, yielding optically active lignans from two molecules of coniferyl alcohol in the biosynthesis of lignans, flavonolignans, and alkaloids and thus plays a central role in plant secondary metabolism. Regulates suberin accumulation in roots. This is Dirigent protein 10 (DIR10) from Arabidopsis thaliana (Mouse-ear cress).